The chain runs to 236 residues: Small ribosomal subunit protein uS3 (236 aa).

Residues 39 to 107 (VREFLKKKLA…PVHLNIEEVR (69 aa)) enclose the KH type-2 domain. The interval 215–236 (AAQPAEPEKKVRKSGAKNAATS) is disordered.

The protein belongs to the universal ribosomal protein uS3 family. Part of the 30S ribosomal subunit. Forms a tight complex with proteins S10 and S14.

In terms of biological role, binds the lower part of the 30S subunit head. Binds mRNA in the 70S ribosome, positioning it for translation. This is Small ribosomal subunit protein uS3 from Methylobacillus flagellatus (strain ATCC 51484 / DSM 6875 / VKM B-1610 / KT).